Here is a 414-residue protein sequence, read N- to C-terminus: Isocitrate dehydrogenase [NADP] cytoplasmic (414 aa).

Residue Ser2 is modified to N-acetylserine. Tyr42 is modified (phosphotyrosine). 75–77 (TIT) is a binding site for NADP(+). Thr77 contributes to the substrate binding site. At Lys81 the chain carries N6-acetyllysine. Position 82 (Arg82) interacts with NADP(+). Substrate contacts are provided by residues 94–100 (SPNGTIR) and Arg109. Lys126 carries the post-translational modification N6-succinyllysine. The substrate site is built by Arg132 and Lys212. N6-acetyllysine occurs at positions 224 and 233. Asp252 contributes to the Mn(2+) binding site. Lys260 provides a ligand contact to NADP(+). Residues Asp275 and Asp279 each contribute to the Mn(2+) site. 310–315 (GTVTRH) serves as a coordination point for NADP(+). The residue at position 321 (Lys321) is an N6-acetyllysine. Asn328 contributes to the NADP(+) binding site. Ser389 carries the phosphoserine modification. The residue at position 400 (Lys400) is an N6-succinyllysine.

It belongs to the isocitrate and isopropylmalate dehydrogenases family. Homodimer. Mg(2+) is required as a cofactor. Mn(2+) serves as cofactor. In terms of processing, acetylation at Lys-374 dramatically reduces catalytic activity. As to expression, expressed preferentially in corneal epithelium. Constitute approximately 13% of the total soluble bovine corneal epithelial proteins.

The protein resides in the cytoplasm. The protein localises to the cytosol. It carries out the reaction D-threo-isocitrate + NADP(+) = 2-oxoglutarate + CO2 + NADPH. Functionally, catalyzes the NADP(+)-dependent oxidative decarboxylation of isocitrate (D-threo-isocitrate) to 2-ketoglutarate (2-oxoglutarate), which is required by other enzymes such as the phytanoyl-CoA dioxygenase. Plays a critical role in the generation of NADPH, an important cofactor in many biosynthesis pathways. May act as a corneal epithelial crystallin and may be involved in maintaining corneal epithelial transparency. The protein is Isocitrate dehydrogenase [NADP] cytoplasmic (IDH1) of Bos taurus (Bovine).